A 938-amino-acid chain; its full sequence is MLSKLLRLGEGRMVKRLKGVADYVNTLSDDIEKLSDAELRGKTDEFRARLAGGKEDLDDVMPEAFAVVREAAWRVLNQRHFDVQIMGGAALHFGNVAEMKTGEGKTLTSVLPAYLNALPGKGVHIVTVNEYLAKRDAEQMGRVHRFLGLDVDVILGTLTPDQRRAAYNADITYGTNWELGFDYLRDNMALRLEDCVQRGHHFAIVDEVDSILIDEARTPLIISGPADGGSNWYTEFARLAPLMKPDVHYEVDIKKRVVGINEAGVEFVEDQLGIENLYEAANSPLISYLNNAIKAKELFERDKHYIVRNGEVFIVDEFTGRMLVGRRYNEGLHQAIEAKEHVEIKAENQTVAQVTLQNYFRMYEKLAGMTGTAETEAAELHEIYKLGVVPIPTNRPMVRKDQSDLIYKTEEAKYIAVVDDVAERYEKGQPVLIGTTSVERSEFLSRQFEKRRIPHNVLNAKYHEQEAGIVAEAGRLGAITVATNMAGRGTDIVLGGNVDYLLDRRLRQRGLDPIETPEEYEQGWHEELPHIKAEVAAEAKDVIAAGGLYVLGTERHESRRIDNQLRGRSGRQGDPGESRFYLSLADELMRRFNGATLETLLTRLNLPDDVPIEAKMVSRAIKSAQTQVEQQNFDIRKEVLKYDEVMNQQRKVVYAERRRILEGENLAGQAHQILVDVITAYVDGATAEGYSEDWDLEKLWEGLRQLYPVGIDHHDLIDSDAVGEPGELTREELLQALIADAERAYAAREAEIEEIAGEGAMRQLERNVLLNVLDRKWREHLYEMDYLREGIGLRGLAQQRPEVEYAREGYDMFIAMLDGMKEESVGFLFNVQVERAPSAPTVAAQAAPAGLAAFAAAAAEQAQAQTGGVATKERPAVGGLRAKGIDDKAQPLTYTGPSEDGGVEVKRSGGGTPSTGGTRKERREAARQQKTGRHAKRR.

ATP contacts are provided by residues glutamine 84, 102–106, and aspartate 491; that span reads GEGKT. Positions 865-938 are disordered; sequence QTGGVATKER…QKTGRHAKRR (74 aa). Over residues 918 to 927 the composition is skewed to basic and acidic residues; sequence TRKERREAAR.

Belongs to the SecA family. As to quaternary structure, monomer and homodimer. Part of the essential Sec protein translocation apparatus which comprises SecA, SecYEG and auxiliary proteins SecDF. Other proteins may also be involved.

The protein resides in the cell membrane. It is found in the cytoplasm. It catalyses the reaction ATP + H2O + cellular proteinSide 1 = ADP + phosphate + cellular proteinSide 2.. Its function is as follows. Part of the Sec protein translocase complex. Interacts with the SecYEG preprotein conducting channel. Has a central role in coupling the hydrolysis of ATP to the transfer of proteins into and across the cell membrane, serving as an ATP-driven molecular motor driving the stepwise translocation of polypeptide chains across the membrane. This chain is Protein translocase subunit SecA 1, found in Mycolicibacterium vanbaalenii (strain DSM 7251 / JCM 13017 / BCRC 16820 / KCTC 9966 / NRRL B-24157 / PYR-1) (Mycobacterium vanbaalenii).